A 401-amino-acid chain; its full sequence is S-adenosylmethionine synthase (401 aa).

Residue 135-140 (GHGSGD) participates in ATP binding.

It belongs to the AdoMet synthase 2 family. The cofactor is Mg(2+).

The enzyme catalyses L-methionine + ATP + H2O = S-adenosyl-L-methionine + phosphate + diphosphate. It participates in amino-acid biosynthesis; S-adenosyl-L-methionine biosynthesis; S-adenosyl-L-methionine from L-methionine: step 1/1. Functionally, catalyzes the formation of S-adenosylmethionine from methionine and ATP. The sequence is that of S-adenosylmethionine synthase (mat) from Methanothermobacter thermautotrophicus (strain ATCC 29096 / DSM 1053 / JCM 10044 / NBRC 100330 / Delta H) (Methanobacterium thermoautotrophicum).